The following is a 208-amino-acid chain: Outer-membrane lipoprotein LolB (208 aa).

The signal sequence occupies residues 1-21 (MLSSKRRLMRLLPLASLLLTA). The N-palmitoyl cysteine moiety is linked to residue Cys-22. Residue Cys-22 is the site of S-diacylglycerol cysteine attachment.

This sequence belongs to the LolB family. In terms of assembly, monomer.

It localises to the cell outer membrane. Its function is as follows. Plays a critical role in the incorporation of lipoproteins in the outer membrane after they are released by the LolA protein. The sequence is that of Outer-membrane lipoprotein LolB from Erwinia tasmaniensis (strain DSM 17950 / CFBP 7177 / CIP 109463 / NCPPB 4357 / Et1/99).